A 276-amino-acid chain; its full sequence is Large ribosomal subunit protein uL2c (276 aa).

Residues 223 to 254 (VVKNPIDHPHGGGEGRSPIGRAKPVTPWGQPA) are disordered.

Belongs to the universal ribosomal protein uL2 family. In terms of assembly, part of the 50S ribosomal subunit.

The protein resides in the plastid. Its subcellular location is the chloroplast. This is Large ribosomal subunit protein uL2c (rpl2) from Emiliania huxleyi (Coccolithophore).